The chain runs to 239 residues: Ribonuclease P protein component 3 (239 aa).

Belongs to the eukaryotic/archaeal RNase P protein component 3 family. In terms of assembly, consists of a catalytic RNA component and at least 4-5 protein subunits.

Its subcellular location is the cytoplasm. The enzyme catalyses Endonucleolytic cleavage of RNA, removing 5'-extranucleotides from tRNA precursor.. Its function is as follows. Part of ribonuclease P, a protein complex that generates mature tRNA molecules by cleaving their 5'-ends. In Methanosarcina acetivorans (strain ATCC 35395 / DSM 2834 / JCM 12185 / C2A), this protein is Ribonuclease P protein component 3.